A 127-amino-acid polypeptide reads, in one-letter code: Large ribosomal subunit protein bL17 (127 aa).

It belongs to the bacterial ribosomal protein bL17 family. Part of the 50S ribosomal subunit. Contacts protein L32.

The sequence is that of Large ribosomal subunit protein bL17 from Xanthomonas oryzae pv. oryzae (strain KACC10331 / KXO85).